The sequence spans 87 residues: DNA-directed RNA polymerase subunit omega (87 aa).

Belongs to the RNA polymerase subunit omega family. As to quaternary structure, the RNAP catalytic core consists of 2 alpha, 1 beta, 1 beta' and 1 omega subunit. When a sigma factor is associated with the core the holoenzyme is formed, which can initiate transcription.

The catalysed reaction is RNA(n) + a ribonucleoside 5'-triphosphate = RNA(n+1) + diphosphate. Promotes RNA polymerase assembly. Latches the N- and C-terminal regions of the beta' subunit thereby facilitating its interaction with the beta and alpha subunits. In Pseudomonas savastanoi pv. phaseolicola (strain 1448A / Race 6) (Pseudomonas syringae pv. phaseolicola (strain 1448A / Race 6)), this protein is DNA-directed RNA polymerase subunit omega.